A 321-amino-acid chain; its full sequence is Aspartate carbamoyltransferase catalytic subunit (321 aa).

Residues Arg64 and Thr65 each contribute to the carbamoyl phosphate site. L-aspartate is bound at residue Lys92. 3 residues coordinate carbamoyl phosphate: Arg114, His142, and Gln145. Positions 175 and 229 each coordinate L-aspartate. Gly270 and Pro271 together coordinate carbamoyl phosphate.

Belongs to the aspartate/ornithine carbamoyltransferase superfamily. ATCase family. As to quaternary structure, heterododecamer (2C3:3R2) of six catalytic PyrB chains organized as two trimers (C3), and six regulatory PyrI chains organized as three dimers (R2).

The enzyme catalyses carbamoyl phosphate + L-aspartate = N-carbamoyl-L-aspartate + phosphate + H(+). It functions in the pathway pyrimidine metabolism; UMP biosynthesis via de novo pathway; (S)-dihydroorotate from bicarbonate: step 2/3. Functionally, catalyzes the condensation of carbamoyl phosphate and aspartate to form carbamoyl aspartate and inorganic phosphate, the committed step in the de novo pyrimidine nucleotide biosynthesis pathway. The chain is Aspartate carbamoyltransferase catalytic subunit from Azorhizobium caulinodans (strain ATCC 43989 / DSM 5975 / JCM 20966 / LMG 6465 / NBRC 14845 / NCIMB 13405 / ORS 571).